Here is a 396-residue protein sequence, read N- to C-terminus: Non-homologous end joining protein Ku (396 aa).

One can recognise a Ku domain in the interval 9 to 189; that stretch reads ISFGLVSIPV…DVAVRPQELS (181 aa). Positions 278–288 are enriched in low complexity; sequence DGDAGPAAAGV. The disordered stretch occupies residues 278 to 396; sequence DGDAGPAAAG…SKTPPTRRSA (119 aa). Basic and acidic residues predominate over residues 294–312; sequence DDKASDDKASDDKASDGRR. Residues 315–336 are compositionally biased toward polar residues; that stretch reads RTSSVKGASSAPGTRSTARKTP. A compositionally biased stretch (low complexity) spans 337 to 396; the sequence is SSTRSTAKTNAATKTPPAKTSAAKASAAKTSAAKATSSRTAPKTAPRTPTSKTPPTRRSA.

This sequence belongs to the prokaryotic Ku family. In terms of assembly, homodimer. Interacts with LigD.

With LigD forms a non-homologous end joining (NHEJ) DNA repair enzyme, which repairs dsDNA breaks with reduced fidelity. Binds linear dsDNA with 5'- and 3'- overhangs but not closed circular dsDNA nor ssDNA. Recruits and stimulates the ligase activity of LigD. The polypeptide is Non-homologous end joining protein Ku (Frankia casuarinae (strain DSM 45818 / CECT 9043 / HFP020203 / CcI3)).